A 269-amino-acid polypeptide reads, in one-letter code: Tetrahydromethanopterin S-methyltransferase subunit C (269 aa).

The next 8 helical transmembrane spans lie at 18 to 38 (VLVI…FVPS), 39 to 59 (LAML…ANTT), 62 to 82 (VAAY…LGMG), 84 to 104 (ISAL…ALPF), 106 to 126 (LVLA…FIVG), 152 to 172 (ALAI…DLII), 180 to 200 (IIAL…NACI), and 222 to 242 (LVFS…VFWI).

The protein belongs to the MtrC family. As to quaternary structure, the complex is composed of 8 subunits; MtrA, MtrB, MtrC, MtrD, MtrE, MtrF, MtrG and MtrH.

The protein localises to the cell membrane. The catalysed reaction is 5-methyl-5,6,7,8-tetrahydromethanopterin + coenzyme M + 2 Na(+)(in) = 5,6,7,8-tetrahydromethanopterin + methyl-coenzyme M + 2 Na(+)(out). It participates in one-carbon metabolism; methanogenesis from CO(2); methyl-coenzyme M from 5,10-methylene-5,6,7,8-tetrahydromethanopterin: step 2/2. Part of a complex that catalyzes the formation of methyl-coenzyme M and tetrahydromethanopterin from coenzyme M and methyl-tetrahydromethanopterin. This is an energy-conserving, sodium-ion translocating step. This Methanococcus vannielii (strain ATCC 35089 / DSM 1224 / JCM 13029 / OCM 148 / SB) protein is Tetrahydromethanopterin S-methyltransferase subunit C.